Reading from the N-terminus, the 374-residue chain is tRNA (guanine(26)-N(2))-dimethyltransferase (374 aa).

The Trm1 methyltransferase domain maps to 4-371 (IEIREGKASL…KEIDEIVNCI (368 aa)). Residues Arg44, Arg69, Asp87, Asp113, and Ala114 each contribute to the S-adenosyl-L-methionine site. Zn(2+) is bound by residues Cys244, Cys247, Cys261, and Cys264.

Belongs to the class I-like SAM-binding methyltransferase superfamily. Trm1 family.

It catalyses the reaction guanosine(26) in tRNA + 2 S-adenosyl-L-methionine = N(2)-dimethylguanosine(26) in tRNA + 2 S-adenosyl-L-homocysteine + 2 H(+). Dimethylates a single guanine residue at position 26 of a number of tRNAs using S-adenosyl-L-methionine as donor of the methyl groups. The sequence is that of tRNA (guanine(26)-N(2))-dimethyltransferase from Sulfurisphaera tokodaii (strain DSM 16993 / JCM 10545 / NBRC 100140 / 7) (Sulfolobus tokodaii).